A 135-amino-acid chain; its full sequence is Transcription antitermination protein NusB (135 aa).

It belongs to the NusB family.

Involved in transcription antitermination. Required for transcription of ribosomal RNA (rRNA) genes. Binds specifically to the boxA antiterminator sequence of the ribosomal RNA (rrn) operons. The sequence is that of Transcription antitermination protein NusB from Clostridium perfringens (strain ATCC 13124 / DSM 756 / JCM 1290 / NCIMB 6125 / NCTC 8237 / Type A).